The sequence spans 626 residues: Chaperone protein HtpG (626 aa).

The interval 1–341 (METKQFKAES…SEDLSLNISR (341 aa)) is a; substrate-binding. Positions 342-552 (EILQHDRQLK…EGELSIEMEK (211 aa)) are b. The disordered stretch occupies residues 490–509 (DLGIEGEEKENTSSSDDKEN). The segment covering 498-509 (KENTSSSDDKEN) has biased composition (basic and acidic residues). Positions 553–626 (VLNAMPNNQN…FTNNICKIMK (74 aa)) are c.

Belongs to the heat shock protein 90 family. Homodimer.

It localises to the cytoplasm. Functionally, molecular chaperone. Has ATPase activity. This chain is Chaperone protein HtpG, found in Clostridium botulinum (strain Loch Maree / Type A3).